Consider the following 649-residue polypeptide: Protein mitoshell (649 aa).

Basic and acidic residues predominate over residues 167 to 176 (LRSEARKPRP). Disordered stretches follow at residues 167–193 (LRSE…ESGA), 389–414 (HGPS…EPTS), and 485–512 (ALPS…VRSY). The span at 177-191 (ESVVPEESSISSLES) shows a compositional bias: low complexity. Composition is skewed to polar residues over residues 393–414 (AFST…EPTS) and 485–503 (ALPS…SPQS).

Functionally, required for male meiotic cytokinesis through its involvement in the regulation of mitochondrial aggregation and fusion, astral spindle assembly and contractile ring formation. This is Protein mitoshell from Drosophila melanogaster (Fruit fly).